A 125-amino-acid chain; its full sequence is Acidic phospholipase A2 5 (125 aa).

A signal peptide is located at residue Ser-1. A propeptide spanning residues 2–7 (NRPMPL) is cleaved from the precursor. Intrachain disulfides connect Cys-18–Cys-77, Cys-33–Cys-124, Cys-35–Cys-50, Cys-37–Cys-54, Cys-49–Cys-105, Cys-56–Cys-98, Cys-66–Cys-91, and Cys-84–Cys-96. Phe-28 contributes to the N-acetyl-beta-D-glucosamine binding site. Asp-30 is a Zn(2+) binding site. Tyr-34 and Gly-36 together coordinate Ca(2+). 2 residues coordinate N-acetyl-beta-D-glucosamine: His-53 and Lys-69. Residue His-53 is part of the active site. Position 76 (Glu-76) interacts with Zn(2+). The active site involves Asp-99. A Zn(2+)-binding site is contributed by Asn-117.

As to quaternary structure, heterodimer formed between isoform 5 and isoform 6 in presence of zinc ion and monomer in absence of zinc ion. Ca(2+) is required as a cofactor. Expressed by the venom gland.

The protein resides in the secreted. The catalysed reaction is a 1,2-diacyl-sn-glycero-3-phosphocholine + H2O = a 1-acyl-sn-glycero-3-phosphocholine + a fatty acid + H(+). PLA2 catalyzes the calcium-dependent hydrolysis of the 2-acyl groups in 3-sn-phosphoglycerides. This is Acidic phospholipase A2 5 from Naja sagittifera (Andaman cobra).